A 297-amino-acid polypeptide reads, in one-letter code: Ribonuclease HIII (297 aa).

The 217-residue stretch at 81–297 (IPIIGTDEVG…NTKKAQALLK (217 aa)) folds into the RNase H type-2 domain. A divalent metal cation is bound by residues D87, E88, and D192.

This sequence belongs to the RNase HII family. RnhC subfamily. Mn(2+) serves as cofactor. It depends on Mg(2+) as a cofactor.

It localises to the cytoplasm. It catalyses the reaction Endonucleolytic cleavage to 5'-phosphomonoester.. In terms of biological role, endonuclease that specifically degrades the RNA of RNA-DNA hybrids. The polypeptide is Ribonuclease HIII (Streptococcus agalactiae serotype Ia (strain ATCC 27591 / A909 / CDC SS700)).